We begin with the raw amino-acid sequence, 130 residues long: Ribosome-binding factor A (130 aa).

The protein belongs to the RbfA family. As to quaternary structure, monomer. Binds 30S ribosomal subunits, but not 50S ribosomal subunits or 70S ribosomes.

It localises to the cytoplasm. Functionally, one of several proteins that assist in the late maturation steps of the functional core of the 30S ribosomal subunit. Associates with free 30S ribosomal subunits (but not with 30S subunits that are part of 70S ribosomes or polysomes). Required for efficient processing of 16S rRNA. May interact with the 5'-terminal helix region of 16S rRNA. The protein is Ribosome-binding factor A of Roseiflexus castenholzii (strain DSM 13941 / HLO8).